The sequence spans 589 residues: ATP-dependent lipid A-core flippase (589 aa).

A run of 5 helical transmembrane segments spans residues 29–49 (LLLV…TGFL), 70–90 (WLPV…YITD), 157–177 (VIGA…TILV), 261–281 (MIGA…ALAG), and 283–303 (LTAG…PGLK). Residues 32 to 314 (VAALIAALIE…LTNVQNMVQR (283 aa)) form the ABC transmembrane type-1 domain. Residues 346 to 582 (IEFRDVTARY…GGLYSHLHGM (237 aa)) form the ABC transporter domain. An ATP-binding site is contributed by 380–387 (GRSGSGKS).

It belongs to the ABC transporter superfamily. Lipid exporter (TC 3.A.1.106) family. As to quaternary structure, homodimer.

Its subcellular location is the cell inner membrane. It carries out the reaction ATP + H2O + lipid A-core oligosaccharideSide 1 = ADP + phosphate + lipid A-core oligosaccharideSide 2.. Involved in lipopolysaccharide (LPS) biosynthesis. Translocates lipid A-core from the inner to the outer leaflet of the inner membrane. Transmembrane domains (TMD) form a pore in the inner membrane and the ATP-binding domain (NBD) is responsible for energy generation. This Xanthomonas campestris pv. campestris (strain 8004) protein is ATP-dependent lipid A-core flippase.